A 288-amino-acid polypeptide reads, in one-letter code: Prohibitin-2 (288 aa).

Residues G21–T43 traverse the membrane as a helical; Signal-anchor for type II membrane protein segment. An AIM motif is present at residues Y125 to L128.

It belongs to the prohibitin family. The mitochondrial prohibitin complex consists of two subunits (phb1 and phb2). The subunits assemble into a membrane-associated ring-shaped supercomplex of approximately 1 mDa.

The protein localises to the mitochondrion inner membrane. Its function is as follows. Prohibitin probably acts as a holdase/unfoldase for the stabilization of newly synthesized mitochondrial proteins. Involved in mitophagy; may act as an adapter for atg8 that supports mitophagosome assembly. Negatively regulates the proteolytic processing of atg32 via the i-AAA protease. Acts as a negative regulator of the m-AAA protease. The chain is Prohibitin-2 (phb2) from Schizosaccharomyces pombe (strain 972 / ATCC 24843) (Fission yeast).